We begin with the raw amino-acid sequence, 341 residues long: Arfaptin-2 (341 aa).

Residues 46-84 (NETSIVSGGYGGSGDGLIPTGSGRHPSHSTSPSGPGDEV) form a disordered region. Low complexity predominate over residues 65-81 (TGSGRHPSHSTSPSGPG). Serine 72 carries the post-translational modification Phosphoserine. The 201-residue stretch at 121–321 (TVDLELELQI…NQKQLEQTLQ (201 aa)) folds into the AH domain.

In terms of assembly, forms homodimers or heterodimers with ARFIP1. Interacts with RAC1. Specifically binds to GTP-bound ARF1 and ARF6, but binds to RAC1.GTP and RAC1.GDP with similar affinities. Interacts with ARL1. Interacts (via N-terminus) with IKBKB and IKBKG; these interactions inhibit activation of NF-kappa-B.

It localises to the golgi apparatus. The protein resides in the trans-Golgi network membrane. Functionally, plays a role in constitutive metalloproteinase (MMP) secretion from the trans Golgi network. May have important functions during vesicle biogenesis at certain cargo subdomains, which could be predominantly utilized by secreted MMPs, such as MMP7 and MMP2. Also involved in autophagy by regulating the starvation-dependent trafficking of ATG9A vesicles which deliver the phosphatidylinositol 4-kinase beta (PI4KB) to the autophagosome initiation site. Involved in phagophore growth during mitophagy by regulating ATG9A trafficking to mitochondria. In addition, plays a role in NF-kappa-B inhibition by interacting with IKBKB and IKBKG. The polypeptide is Arfaptin-2 (Mus musculus (Mouse)).